Consider the following 465-residue polypeptide: Probable Xaa-Pro aminopeptidase pepP (465 aa).

Mn(2+) contacts are provided by Asp-263, Asp-274, Glu-397, and Glu-437.

The protein belongs to the peptidase M24B family. Requires Mn(2+) as cofactor.

The enzyme catalyses Release of any N-terminal amino acid, including proline, that is linked to proline, even from a dipeptide or tripeptide.. In terms of biological role, catalyzes the removal of a penultimate prolyl residue from the N-termini of peptides. This is Probable Xaa-Pro aminopeptidase pepP (pepP) from Penicillium rubens (strain ATCC 28089 / DSM 1075 / NRRL 1951 / Wisconsin 54-1255) (Penicillium chrysogenum).